A 336-amino-acid chain; its full sequence is Dihydroorotate dehydrogenase (quinone) (336 aa).

Residues 62–66 (AGLDK) and T86 contribute to the FMN site. K66 is a substrate binding site. 111–115 (NRMGF) contacts substrate. Residues N139 and N172 each contribute to the FMN site. N172 is a binding site for substrate. The active-site Nucleophile is the S175. Residue N177 coordinates substrate. Residues K217 and T245 each contribute to the FMN site. 246–247 (NT) provides a ligand contact to substrate. Residues G268, G297, and 318–319 (YS) contribute to the FMN site.

It belongs to the dihydroorotate dehydrogenase family. Type 2 subfamily. In terms of assembly, monomer. FMN is required as a cofactor.

It is found in the cell membrane. The enzyme catalyses (S)-dihydroorotate + a quinone = orotate + a quinol. The protein operates within pyrimidine metabolism; UMP biosynthesis via de novo pathway; orotate from (S)-dihydroorotate (quinone route): step 1/1. Its function is as follows. Catalyzes the conversion of dihydroorotate to orotate with quinone as electron acceptor. In Aliivibrio fischeri (strain ATCC 700601 / ES114) (Vibrio fischeri), this protein is Dihydroorotate dehydrogenase (quinone).